The primary structure comprises 163 residues: Transcriptional repressor NrdR (163 aa).

Residues C3–C34 fold into a zinc finger. Residues P49–A139 enclose the ATP-cone domain.

Belongs to the NrdR family. It depends on Zn(2+) as a cofactor.

Functionally, negatively regulates transcription of bacterial ribonucleotide reductase nrd genes and operons by binding to NrdR-boxes. The polypeptide is Transcriptional repressor NrdR (Acidithiobacillus ferrooxidans (strain ATCC 23270 / DSM 14882 / CIP 104768 / NCIMB 8455) (Ferrobacillus ferrooxidans (strain ATCC 23270))).